The primary structure comprises 294 residues: Equatorin (294 aa).

The first 14 residues, 1-14, serve as a signal peptide directing secretion; the sequence is MNFILFIFIPGVFS. At 15–181 the chain is on the vesicular side; that stretch reads LKSSTLKPTI…QPDLEDLKIK (167 aa). A glycan (N-linked (GlcNAc...) asparagine) is linked at Asn-76. The interval 107-126 is disordered; that stretch reads KSTIEEETTTSEPSHKNIQR. N-linked (GlcNAc...) asparagine glycosylation is present at Asn-143. The helical transmembrane segment at 182 to 202 threads the bilayer; sequence IMLGISLMTLLLFVVLLAFCS. The Cytoplasmic segment spans residues 203–294; the sequence is ATLYKLRHLS…MHENDESVTR (92 aa).

As to quaternary structure, interacts with SNAP25. Post-translationally, highly N- and O-glycosylated; contains sialic acid. In terms of tissue distribution, isoform 1 is highly expressed in testis. Isoform 2 is expressed at low levels in skin and blood.

The protein localises to the cytoplasmic vesicle. It is found in the secretory vesicle. Its subcellular location is the acrosome membrane. It localises to the acrosome inner membrane. The protein resides in the acrosome outer membrane. Its function is as follows. Acrosomal membrane-anchored protein involved in the process of fertilization and in acrosome biogenesis. The polypeptide is Equatorin (EQTN) (Homo sapiens (Human)).